Consider the following 102-residue polypeptide: Large ribosomal subunit protein bL21 (102 aa).

Belongs to the bacterial ribosomal protein bL21 family. As to quaternary structure, part of the 50S ribosomal subunit. Contacts protein L20.

Its function is as follows. This protein binds to 23S rRNA in the presence of protein L20. This Campylobacter jejuni subsp. jejuni serotype O:6 (strain 81116 / NCTC 11828) protein is Large ribosomal subunit protein bL21.